We begin with the raw amino-acid sequence, 258 residues long: Small ribosomal subunit protein mS23 (258 aa).

Belongs to the mitochondrion-specific ribosomal protein mS23 family. As to quaternary structure, component of the mitochondrial small ribosomal subunit.

It is found in the mitochondrion. The chain is Small ribosomal subunit protein mS23 (rsm25) from Aspergillus fumigatus (strain ATCC MYA-4609 / CBS 101355 / FGSC A1100 / Af293) (Neosartorya fumigata).